Consider the following 371-residue polypeptide: Ferrochelatase (371 aa).

Residues His-218 and Glu-299 each contribute to the Fe cation site.

This sequence belongs to the ferrochelatase family.

Its subcellular location is the cytoplasm. It catalyses the reaction heme b + 2 H(+) = protoporphyrin IX + Fe(2+). Its pathway is porphyrin-containing compound metabolism; protoheme biosynthesis; protoheme from protoporphyrin-IX: step 1/1. In terms of biological role, catalyzes the ferrous insertion into protoporphyrin IX. This chain is Ferrochelatase, found in Cupriavidus taiwanensis (strain DSM 17343 / BCRC 17206 / CCUG 44338 / CIP 107171 / LMG 19424 / R1) (Ralstonia taiwanensis (strain LMG 19424)).